A 547-amino-acid polypeptide reads, in one-letter code: (E)-beta-caryophyllene synthase (547 aa).

Mg(2+) is bound by residues Asp302 and Asp306. Substrate is bound by residues Asp302, Asp306, Arg443, and Asn446. Positions 302–306 (DDLYD) match the DDXXD motif motif. Residues Asn446 and Glu454 each coordinate Mg(2+).

This sequence belongs to the terpene synthase family. As to quaternary structure, monomer. The cofactor is Mg(2+). It depends on Mn(2+) as a cofactor.

The protein resides in the cytoplasm. The catalysed reaction is (2E,6E)-farnesyl diphosphate = (-)-(E)-beta-caryophyllene + diphosphate. It functions in the pathway secondary metabolite biosynthesis; terpenoid biosynthesis. Component of the volatile terpenes biosynthesis pathways. Sesquiterpene synthase that converts farnesyl diphosphate to (E)-beta-caryophyllene. Involved in indirect defense by producing volatile signals attracting natural enemies of herbivores. The polypeptide is (E)-beta-caryophyllene synthase (Zea mays (Maize)).